Reading from the N-terminus, the 152-residue chain is 3-dehydroquinate dehydratase (152 aa).

The active-site Proton acceptor is the tyrosine 22. Residues asparagine 73, histidine 79, and aspartate 86 each contribute to the substrate site. Histidine 99 serves as the catalytic Proton donor. Residues 100–101 (LS) and arginine 110 contribute to the substrate site.

Belongs to the type-II 3-dehydroquinase family. As to quaternary structure, homododecamer.

The catalysed reaction is 3-dehydroquinate = 3-dehydroshikimate + H2O. Its pathway is metabolic intermediate biosynthesis; chorismate biosynthesis; chorismate from D-erythrose 4-phosphate and phosphoenolpyruvate: step 3/7. Catalyzes a trans-dehydration via an enolate intermediate. The protein is 3-dehydroquinate dehydratase of Gemmatimonas aurantiaca (strain DSM 14586 / JCM 11422 / NBRC 100505 / T-27).